The primary structure comprises 294 residues: UPF0761 membrane protein YPK_4186 (294 aa).

The next 7 helical transmembrane spans lie at 44–64, 67–87, 108–128, 136–156, 185–205, 212–232, and 246–266; these read LLSLVPLITVIFALFAAFPMF, ISIKLKAFIFANFMPATGDII, GLIVTALLLIYSVDSVLNIIW, LVFSFAVYWMVLTLGPILVGA, VFPLLISWVSFWLLYSVVPTV, ALIGALVAALLFELGKKGFAM, and VLAVIPILFLWVYWSWCIVLL.

Belongs to the UPF0761 family.

The protein resides in the cell inner membrane. This chain is UPF0761 membrane protein YPK_4186, found in Yersinia pseudotuberculosis serotype O:3 (strain YPIII).